A 207-amino-acid chain; its full sequence is 23 kDa calcium-binding protein (207 aa).

Residue Met-1 is modified to Blocked amino end (Met). 4 EF-hand domains span residues 17–52 (AKLDVARKLFAQFDSNKNGTLDPSEVAGLIKTTFEN), 60–95 (VTADDVKLYMKSVDVDNNGLVSYSEYEEYVIACLKK), 119–154 (MKLDVARRLFAKYDSDKSGQLEEKEVYGVITETYKQ), and 161–196 (PTEADVKLWMSMTDTDKNGTVSIVEYEDFVISGLKK). Residues Asp-30, Asn-32, Asn-34, Thr-36, Glu-41, Asp-73, Asp-75, Asn-77, Glu-84, Asp-132, Asp-134, Ser-136, Gln-138, Glu-143, Asp-174, Asp-176, Asn-178, Thr-180, and Glu-185 each coordinate Ca(2+).

In terms of biological role, expected to play a crucial role in calcium-dependent regulation of ciliary movement. The polypeptide is 23 kDa calcium-binding protein (Tetrahymena thermophila).